A 119-amino-acid polypeptide reads, in one-letter code: Phosphoribosyl-AMP cyclohydrolase (119 aa).

Asp77 is a Mg(2+) binding site. Cys78 contacts Zn(2+). 2 residues coordinate Mg(2+): Asp79 and Asp81. The Zn(2+) site is built by Cys94 and Cys101.

Belongs to the PRA-CH family. As to quaternary structure, homodimer. It depends on Mg(2+) as a cofactor. Zn(2+) serves as cofactor.

The protein resides in the cytoplasm. The catalysed reaction is 1-(5-phospho-beta-D-ribosyl)-5'-AMP + H2O = 1-(5-phospho-beta-D-ribosyl)-5-[(5-phospho-beta-D-ribosylamino)methylideneamino]imidazole-4-carboxamide. It participates in amino-acid biosynthesis; L-histidine biosynthesis; L-histidine from 5-phospho-alpha-D-ribose 1-diphosphate: step 3/9. Its function is as follows. Catalyzes the hydrolysis of the adenine ring of phosphoribosyl-AMP. The chain is Phosphoribosyl-AMP cyclohydrolase from Cereibacter sphaeroides (strain KD131 / KCTC 12085) (Rhodobacter sphaeroides).